We begin with the raw amino-acid sequence, 361 residues long: Holliday junction branch migration complex subunit RuvB (361 aa).

The tract at residues 1-183 is large ATPase domain (RuvB-L); sequence MAEPSLVAAG…FGFTGHLEFY (183 aa). Residues Leu22, Arg23, Gly64, Lys67, Thr68, Thr69, 130–132, Arg173, Tyr183, and Arg220 each bind ATP; that span reads EDF. Mg(2+) is bound at residue Thr68. The tract at residues 184–254 is small ATPAse domain (RuvB-S); sequence SVPELELVLR…SASAALDMYE (71 aa). Positions 257–361 are head domain (RuvB-H); sequence KKGLDRLDRS…VTGEWAPESQ (105 aa). Residues Arg312 and Arg317 each coordinate DNA.

The protein belongs to the RuvB family. Homohexamer. Forms an RuvA(8)-RuvB(12)-Holliday junction (HJ) complex. HJ DNA is sandwiched between 2 RuvA tetramers; dsDNA enters through RuvA and exits via RuvB. An RuvB hexamer assembles on each DNA strand where it exits the tetramer. Each RuvB hexamer is contacted by two RuvA subunits (via domain III) on 2 adjacent RuvB subunits; this complex drives branch migration. In the full resolvosome a probable DNA-RuvA(4)-RuvB(12)-RuvC(2) complex forms which resolves the HJ.

The protein localises to the cytoplasm. It catalyses the reaction ATP + H2O = ADP + phosphate + H(+). Functionally, the RuvA-RuvB-RuvC complex processes Holliday junction (HJ) DNA during genetic recombination and DNA repair, while the RuvA-RuvB complex plays an important role in the rescue of blocked DNA replication forks via replication fork reversal (RFR). RuvA specifically binds to HJ cruciform DNA, conferring on it an open structure. The RuvB hexamer acts as an ATP-dependent pump, pulling dsDNA into and through the RuvAB complex. RuvB forms 2 homohexamers on either side of HJ DNA bound by 1 or 2 RuvA tetramers; 4 subunits per hexamer contact DNA at a time. Coordinated motions by a converter formed by DNA-disengaged RuvB subunits stimulates ATP hydrolysis and nucleotide exchange. Immobilization of the converter enables RuvB to convert the ATP-contained energy into a lever motion, pulling 2 nucleotides of DNA out of the RuvA tetramer per ATP hydrolyzed, thus driving DNA branch migration. The RuvB motors rotate together with the DNA substrate, which together with the progressing nucleotide cycle form the mechanistic basis for DNA recombination by continuous HJ branch migration. Branch migration allows RuvC to scan DNA until it finds its consensus sequence, where it cleaves and resolves cruciform DNA. The sequence is that of Holliday junction branch migration complex subunit RuvB from Pseudarthrobacter chlorophenolicus (strain ATCC 700700 / DSM 12829 / CIP 107037 / JCM 12360 / KCTC 9906 / NCIMB 13794 / A6) (Arthrobacter chlorophenolicus).